The sequence spans 149 residues: Sec-independent protein translocase protein TatB (149 aa).

The chain crosses the membrane as a helical span at residues 1–21 (MFDIGFTELIVIGIVALVVVG). The segment at 92–149 (VDMLDKSVRNEPQNAQTPPQTADAEPAQPDVRQQTLPLEEPDQNRAAGEPSSTSTRPA) is disordered. Polar residues predominate over residues 101 to 111 (NEPQNAQTPPQ).

Belongs to the TatB family. In terms of assembly, the Tat system comprises two distinct complexes: a TatABC complex, containing multiple copies of TatA, TatB and TatC subunits, and a separate TatA complex, containing only TatA subunits. Substrates initially bind to the TatABC complex, which probably triggers association of the separate TatA complex to form the active translocon.

It is found in the cell inner membrane. Part of the twin-arginine translocation (Tat) system that transports large folded proteins containing a characteristic twin-arginine motif in their signal peptide across membranes. Together with TatC, TatB is part of a receptor directly interacting with Tat signal peptides. TatB may form an oligomeric binding site that transiently accommodates folded Tat precursor proteins before their translocation. The chain is Sec-independent protein translocase protein TatB from Thiobacillus denitrificans (strain ATCC 25259 / T1).